Here is a 912-residue protein sequence, read N- to C-terminus: Probable dipeptidyl-aminopeptidase B (912 aa).

Disordered regions lie at residues 1–30 (MAAE…SNSL) and 48–68 (NGST…DYSD). Topologically, residues 1 to 92 (MAAEKGGSSD…GGKPVQKKVK (92 aa)) are cytoplasmic. Composition is skewed to basic and acidic residues over residues 7-25 (GSSD…EYRD) and 54-67 (TGPD…RDYS). Residues 93–113 (IVLGFLLFLCLSGWSLAFVLF) form a helical; Signal-anchor for type II membrane protein membrane-spanning segment. At 114-912 (LFGGHESSKT…RAATWVGMSI (799 aa)) the chain is on the vacuolar side. 5 N-linked (GlcNAc...) asparagine glycosylation sites follow: Asn130, Asn210, Asn346, Asn569, and Asn656. The active-site Charge relay system is Ser751. Asn810 carries an N-linked (GlcNAc...) asparagine glycan. Active-site charge relay system residues include Asp828 and His861. N-linked (GlcNAc...) asparagine glycosylation occurs at Asn897.

It belongs to the peptidase S9B family.

The protein resides in the vacuole membrane. The catalysed reaction is Release of an N-terminal dipeptide, Xaa-Yaa-|-Zaa-, from a polypeptide, preferentially when Yaa is Pro, provided Zaa is neither Pro nor hydroxyproline.. In terms of biological role, type IV dipeptidyl-peptidase which removes N-terminal dipeptides sequentially from polypeptides having unsubstituted N-termini provided that the penultimate residue is proline. The chain is Probable dipeptidyl-aminopeptidase B (DAPB) from Paracoccidioides brasiliensis (strain Pb18).